Consider the following 665-residue polypeptide: Methionine--tRNA ligase (665 aa).

A 'HIGH' region motif is present at residues 12–22 (YYPSGKLHIGS). Positions 308–312 (KMSKS) match the 'KMSKS' region motif. Lysine 311 is an ATP binding site. Residues 562-665 (TFDAVEIRVA…PSVPNGSIIG (104 aa)) enclose the tRNA-binding domain.

Belongs to the class-I aminoacyl-tRNA synthetase family. MetG type 2B subfamily. In terms of assembly, homodimer.

It is found in the cytoplasm. It carries out the reaction tRNA(Met) + L-methionine + ATP = L-methionyl-tRNA(Met) + AMP + diphosphate. Its function is as follows. Is required not only for elongation of protein synthesis but also for the initiation of all mRNA translation through initiator tRNA(fMet) aminoacylation. The chain is Methionine--tRNA ligase (metG) from Streptococcus pyogenes serotype M6 (strain ATCC BAA-946 / MGAS10394).